Reading from the N-terminus, the 348-residue chain is UDP-3-O-acylglucosamine N-acyltransferase (348 aa).

Residue His-241 is the Proton acceptor of the active site.

It belongs to the transferase hexapeptide repeat family. LpxD subfamily. Homotrimer.

The enzyme catalyses a UDP-3-O-[(3R)-3-hydroxyacyl]-alpha-D-glucosamine + a (3R)-hydroxyacyl-[ACP] = a UDP-2-N,3-O-bis[(3R)-3-hydroxyacyl]-alpha-D-glucosamine + holo-[ACP] + H(+). The protein operates within bacterial outer membrane biogenesis; LPS lipid A biosynthesis. Its function is as follows. Catalyzes the N-acylation of UDP-3-O-acylglucosamine using 3-hydroxyacyl-ACP as the acyl donor. Is involved in the biosynthesis of lipid A, a phosphorylated glycolipid that anchors the lipopolysaccharide to the outer membrane of the cell. The protein is UDP-3-O-acylglucosamine N-acyltransferase of Neisseria meningitidis serogroup B (strain ATCC BAA-335 / MC58).